The sequence spans 171 residues: Adenine phosphoribosyltransferase (171 aa).

It belongs to the purine/pyrimidine phosphoribosyltransferase family. In terms of assembly, homodimer.

Its subcellular location is the cytoplasm. The enzyme catalyses AMP + diphosphate = 5-phospho-alpha-D-ribose 1-diphosphate + adenine. It participates in purine metabolism; AMP biosynthesis via salvage pathway; AMP from adenine: step 1/1. Functionally, catalyzes a salvage reaction resulting in the formation of AMP, that is energically less costly than de novo synthesis. In Trichlorobacter lovleyi (strain ATCC BAA-1151 / DSM 17278 / SZ) (Geobacter lovleyi), this protein is Adenine phosphoribosyltransferase.